Here is a 221-residue protein sequence, read N- to C-terminus: Oxaloacetate tautomerase FAHD1, mitochondrial (221 aa).

The transit peptide at 1–24 (MASTKPLSRFWEWGKNIVCVGRNY) directs the protein to the mitochondrion. Ser37 is subject to Phosphoserine. Glu68, Glu70, and Asp99 together coordinate Mg(2+). Residue Lys110 is modified to N6-acetyllysine. N6-succinyllysine is present on Lys112.

This sequence belongs to the FAH family. As to quaternary structure, homodimer. The cofactor is Mg(2+). Mn(2+) serves as cofactor.

It localises to the mitochondrion. Its subcellular location is the cytoplasm. It is found in the cytosol. It catalyses the reaction oxaloacetate = enol-oxaloacetate. The catalysed reaction is oxaloacetate + H(+) = pyruvate + CO2. It carries out the reaction a 3-acylpyruvate + H2O = a carboxylate + pyruvate + H(+). The enzyme catalyses acetylpyruvate + H2O = acetate + pyruvate + H(+). It catalyses the reaction 3-fumarylpyruvate + H2O = fumarate + pyruvate + H(+). With respect to regulation, oxaloacetate decarboxylation is competitively inhibited by oxalate. Its function is as follows. Tautomerase that converts enol-oxaloacetate, a strong inhibitor of succinate dehydrogenase, to the physiological keto form of oxaloacetate. It is thereby required to maximize aerobic respiration efficiency by preventing succinate dehydrogenase inhibition. Also acts as a weak oxaloacetate decarboxylase (ODx), catalyzing the decarboxylation of oxaloacetate (OAA) to pyruvate and CO(2), and as such is likely a regulatory enzyme in the TCA cycle. Also displays acylpyruvase activity, being able to hydrolyze acetylpyruvate and fumarylpyruvate in vitro. The protein is Oxaloacetate tautomerase FAHD1, mitochondrial of Rattus norvegicus (Rat).